Here is a 180-residue protein sequence, read N- to C-terminus: Fetal and adult testis-expressed transcript protein homolog (180 aa).

The segment at 77-108 (GPQLRGVGVVGEQGDGGAQPQENPGGSQGMRS) is disordered. The span at 84-93 (GVVGEQGDGG) shows a compositional bias: gly residues. The span at 96–107 (PQENPGGSQGMR) shows a compositional bias: polar residues. A helical transmembrane segment spans residues 160–178 (VLLFTMLLSSCITNLWLWM).

In terms of assembly, interacts with BIK and RNF183. Interacts with IMMT/MIC60and EMD.

It localises to the mitochondrion. It is found in the mitochondrion outer membrane. Its subcellular location is the endoplasmic reticulum membrane. Its function is as follows. Involved in the regulation of endoplasmic reticulum (ER)-mitochondria coupling. Negatively regulates the ER-mitochondria distance and Ca(2+) transfer from ER to mitochondria possibly implicating it in the regulation of apoptosis. May collaborate with RNF183 to restrain BIK protein levels thus regulating apoptotic signaling. The chain is Fetal and adult testis-expressed transcript protein homolog (FATE1) from Bos taurus (Bovine).